Here is a 436-residue protein sequence, read N- to C-terminus: 3-ketoacyl-CoA thiolase (436 aa).

Cys-99 serves as the catalytic Acyl-thioester intermediate. Residues His-392 and Cys-422 each act as proton acceptor in the active site.

This sequence belongs to the thiolase-like superfamily. Thiolase family. In terms of assembly, heterotetramer of two alpha chains (FadJ) and two beta chains (FadI).

Its subcellular location is the cytoplasm. The catalysed reaction is an acyl-CoA + acetyl-CoA = a 3-oxoacyl-CoA + CoA. The protein operates within lipid metabolism; fatty acid beta-oxidation. In terms of biological role, catalyzes the final step of fatty acid oxidation in which acetyl-CoA is released and the CoA ester of a fatty acid two carbons shorter is formed. The protein is 3-ketoacyl-CoA thiolase of Shigella flexneri serotype 5b (strain 8401).